Reading from the N-terminus, the 449-residue chain is Tubulin beta chain (449 aa).

Gln-11, Glu-69, Ser-138, Gly-142, Thr-143, Gly-144, Asn-204, and Asn-226 together coordinate GTP. Glu-69 serves as a coordination point for Mg(2+). Residues 426-449 are disordered; the sequence is QDATAEEEGEFDEEEGEMGAEEGA. The segment covering 429–449 has biased composition (acidic residues); the sequence is TAEEEGEFDEEEGEMGAEEGA.

It belongs to the tubulin family. Dimer of alpha and beta chains. A typical microtubule is a hollow water-filled tube with an outer diameter of 25 nm and an inner diameter of 15 nM. Alpha-beta heterodimers associate head-to-tail to form protofilaments running lengthwise along the microtubule wall with the beta-tubulin subunit facing the microtubule plus end conferring a structural polarity. Microtubules usually have 13 protofilaments but different protofilament numbers can be found in some organisms and specialized cells. Mg(2+) serves as cofactor.

It is found in the cytoplasm. The protein localises to the cytoskeleton. Functionally, tubulin is the major constituent of microtubules, a cylinder consisting of laterally associated linear protofilaments composed of alpha- and beta-tubulin heterodimers. Microtubules grow by the addition of GTP-tubulin dimers to the microtubule end, where a stabilizing cap forms. Below the cap, tubulin dimers are in GDP-bound state, owing to GTPase activity of alpha-tubulin. This chain is Tubulin beta chain, found in Toxoplasma gondii.